A 144-amino-acid chain; its full sequence is Protein cornichon homolog 1 (144 aa).

The Cytoplasmic segment spans residues Met1–Tyr10. The chain crosses the membrane as a helical span at residues Met11–Phe31. At Asp32–Tyr56 the chain is on the lumenal side. A helical membrane pass occupies residues Leu57–Leu77. The Cytoplasmic segment spans residues Asn78–Lys122. A helical membrane pass occupies residues Leu123–Ser143. A topological domain (lumenal) is located at residue Ser144.

The protein belongs to the cornichon family. As to quaternary structure, interacts with AREG immature precursor and with immature TGFA, i.e. with a prosegment and lacking full N-glycosylation, but not with the fully N-glycosylated form. In the Golgi apparatus, may form a complex with GORASP55 and transmembrane TGFA.

Its subcellular location is the endoplasmic reticulum membrane. The protein localises to the golgi apparatus membrane. In terms of biological role, involved in the selective transport and maturation of TGF-alpha family proteins. The sequence is that of Protein cornichon homolog 1 (CNIH1) from Bos taurus (Bovine).